A 329-amino-acid chain; its full sequence is DNA repair protein RAD51 homolog 4 (329 aa).

A preferentially binds ssDNA region spans residues 1-83; sequence MGMLRAGLCP…ELKTSTAILS (83 aa). Residues 4 to 77 form an interaction with XRCC2 region; sequence LRAGLCPGLT…GADLYEELKT (74 aa). The interval 77–328 is interaction with RAD51C; it reads TSTAILSTGI…EQSPELPGKQ (252 aa). 107 to 114 contributes to the ATP binding site; that stretch reads GGPGSGKT.

It belongs to the RecA family. RAD51 subfamily. Part of the BCDX2 complex consisting of RAD51B, RAD51C, RAD51D and XRCC2; the complex has a ring-like structure arranged into a flat disc around a central channel. In the absence of DNA, the BCDX2 subcomplex XRCC2:RAD51D formed a multimeric ring structure; in the presence of single-stranded DNA it formed a filamentous structure with the ssDNA. Interacts with SWSAP1 and ZSWIM7; involved in homologous recombination repair. Interacts with BLM; required for stimulation of BLM activity by the BCDX2 subcomplex XRCC2:RAD51D. Highly expressed in brain followed by testis. Also expressed in heart, liver, kidney, spleen, lung and skeletal muscle.

It localises to the nucleus. It is found in the chromosome. Its subcellular location is the telomere. Functionally, involved in the homologous recombination repair (HRR) pathway of double-stranded DNA breaks arising during DNA replication or induced by DNA-damaging agents. Bind to single-stranded DNA (ssDNA) and has DNA-dependent ATPase activity. Part of the RAD51 paralog protein complex BCDX2 which acts in the BRCA1-BRCA2-dependent HR pathway. Upon DNA damage, BCDX2 acts downstream of BRCA2 recruitment and upstream of RAD51 recruitment. BCDX2 binds predominantly to the intersection of the four duplex arms of the Holliday junction and to junction of replication forks. The BCDX2 complex was originally reported to bind single-stranded DNA, single-stranded gaps in duplex DNA and specifically to nicks in duplex DNA. Involved in telomere maintenance. The BCDX2 subcomplex XRCC2:RAD51D can stimulate Holliday junction resolution by BLM. The polypeptide is DNA repair protein RAD51 homolog 4 (Rad51d) (Mus musculus (Mouse)).